A 242-amino-acid chain; its full sequence is NADPH-dependent pterin aldehyde reductase (242 aa).

Thr-2 is modified (N-acetylthreonine). 21–50 (LITGVSKGLGRALALELAKRGHTVIGCARS) provides a ligand contact to NADP(+). Residue Ser-153 participates in substrate binding. Catalysis depends on Tyr-166, which acts as the Proton acceptor. Residue Lys-170 participates in NADP(+) binding.

This sequence belongs to the short-chain dehydrogenases/reductases (SDR) family. In terms of assembly, homodimer. As to expression, mostly expressed in seeds, and, to a lower extent, in roots, leaves, flowers and siliques.

It is found in the cytoplasm. Its function is as follows. NADPH-dependent pterin aldehyde reductase involved in pterin aldehyde salvage during folate turnover. Catalyzes the reduction of diverse aromatic and aliphatic aldehydes (e.g. acetaldehyde, n-propanal, 1-naphthaldehyde, benzaldehyde, cinnamaldehyde, n-butanal, n-hexanal, n-pentanal, 2-naphthaldehyde, n-octanal, n-nonanal and n-heptanal), in addition to the conversion of pterin-6-aldehyde (PtCHO) to 6-hydroxymethylpterin (PtCH(2)OH), and the conversion of dihydropterin-6-aldehyde (H(2)PtCHO) to 6-hydroxymethyldihydropterin (H(2)PtCH(2)OH). Cannot reduce the pterin ring. This Arabidopsis thaliana (Mouse-ear cress) protein is NADPH-dependent pterin aldehyde reductase.